Consider the following 142-residue polypeptide: ATP synthase epsilon chain (142 aa).

The protein belongs to the ATPase epsilon chain family. As to quaternary structure, F-type ATPases have 2 components, CF(1) - the catalytic core - and CF(0) - the membrane proton channel. CF(1) has five subunits: alpha(3), beta(3), gamma(1), delta(1), epsilon(1). CF(0) has three main subunits: a, b and c.

Its subcellular location is the cell inner membrane. Functionally, produces ATP from ADP in the presence of a proton gradient across the membrane. The protein is ATP synthase epsilon chain of Histophilus somni (strain 2336) (Haemophilus somnus).